Consider the following 231-residue polypeptide: MFSATGKRCFTIESLVAKESPITLEDPIRPTALSYSAPADSFLNGYQSPAGRALYPNPELVFSETVNHAPLSMHPHQLGSAPLQHPHFFGTQHREPLNFYPWVLRNRFFGHRFQGNDVSQDTLLLHGPFARKPKRIRTAFSPSQLLRLERAFEKNHYVVGAERKQLANSLSLSETQVKVWFQNRRTKYKRQKLEEEGPECTQKKKGNHHINRWRIATKQTGSEDIDVMSDA.

A DNA-binding region (homeobox) is located at residues 133–192 (PKRIRTAFSPSQLLRLERAFEKNHYVVGAERKQLANSLSLSETQVKVWFQNRRTKYKRQK). The segment at 193–231 (LEEEGPECTQKKKGNHHINRWRIATKQTGSEDIDVMSDA) is disordered. Residues 203 to 212 (KKKGNHHINR) are compositionally biased toward basic residues.

It belongs to the EMX homeobox family.

Its subcellular location is the nucleus. Functionally, may function in combinations with OTX1/2 to specify cell fates in the developing central nervous system. The protein is Homeobox protein EMX1 (emx1) of Danio rerio (Zebrafish).